An 86-amino-acid chain; its full sequence is Toxin CngtIV (86 aa).

Positions 1–19 are cleaved as a signal peptide; that stretch reads MNSLLIITACLVLIGTVWA. The region spanning 20 to 84 is the LCN-type CS-alpha/beta domain; the sequence is KDGYLVDVKG…TWPLPNKRCG (65 aa). Intrachain disulfides connect Cys-30–Cys-83, Cys-34–Cys-59, Cys-43–Cys-64, and Cys-47–Cys-66.

This sequence belongs to the long (4 C-C) scorpion toxin superfamily. Sodium channel inhibitor family. Beta subfamily. Expressed by the venom gland.

The protein resides in the secreted. Its function is as follows. Beta toxins bind voltage-independently at site-4 of sodium channels (Nav) and shift the voltage of activation toward more negative potentials thereby affecting sodium channel activation and promoting spontaneous and repetitive firing. The polypeptide is Toxin CngtIV (Centruroides noxius (Mexican scorpion)).